Reading from the N-terminus, the 536-residue chain is Glucose-6-phosphate isomerase (536 aa).

Residue Glu345 is the Proton donor of the active site. Catalysis depends on residues His376 and Lys505.

Belongs to the GPI family.

Its subcellular location is the cytoplasm. It carries out the reaction alpha-D-glucose 6-phosphate = beta-D-fructose 6-phosphate. It functions in the pathway carbohydrate biosynthesis; gluconeogenesis. Its pathway is carbohydrate degradation; glycolysis; D-glyceraldehyde 3-phosphate and glycerone phosphate from D-glucose: step 2/4. Its function is as follows. Catalyzes the reversible isomerization of glucose-6-phosphate to fructose-6-phosphate. The sequence is that of Glucose-6-phosphate isomerase from Ruegeria sp. (strain TM1040) (Silicibacter sp.).